A 70-amino-acid polypeptide reads, in one-letter code: Cold shock-like protein CspF (70 aa).

Residues 7-67 (GIVKTFDGKS…GLRGPSAANV (61 aa)) form the CSD domain.

Its subcellular location is the cytoplasm. The sequence is that of Cold shock-like protein CspF (cspF) from Escherichia coli (strain K12).